The primary structure comprises 203 residues: Small ribosomal subunit protein uS10m (203 aa).

The transit peptide at 1–14 (MLRNTIALRSFIRT) directs the protein to the mitochondrion. Phosphoserine is present on Ser-193.

The protein belongs to the universal ribosomal protein uS10 family. In terms of assembly, component of the mitochondrial small ribosomal subunit (mt-SSU). Mature yeast 74S mitochondrial ribosomes consist of a small (37S) and a large (54S) subunit. The 37S small subunit contains a 15S ribosomal RNA (15S mt-rRNA) and 34 different proteins. The 54S large subunit contains a 21S rRNA (21S mt-rRNA) and 46 different proteins.

It is found in the mitochondrion. Functionally, component of the mitochondrial ribosome (mitoribosome), a dedicated translation machinery responsible for the synthesis of mitochondrial genome-encoded proteins, including at least some of the essential transmembrane subunits of the mitochondrial respiratory chain. The mitoribosomes are attached to the mitochondrial inner membrane and translation products are cotranslationally integrated into the membrane. The chain is Small ribosomal subunit protein uS10m (RSM10) from Saccharomyces cerevisiae (strain ATCC 204508 / S288c) (Baker's yeast).